The chain runs to 282 residues: tRNA pseudouridine synthase B (282 aa).

Residue aspartate 36 is the Nucleophile of the active site.

Belongs to the pseudouridine synthase TruB family. Type 1 subfamily.

The catalysed reaction is uridine(55) in tRNA = pseudouridine(55) in tRNA. Functionally, responsible for synthesis of pseudouridine from uracil-55 in the psi GC loop of transfer RNAs. This chain is tRNA pseudouridine synthase B, found in Mycoplasmopsis pulmonis (strain UAB CTIP) (Mycoplasma pulmonis).